The sequence spans 231 residues: GTP cyclohydrolase III (231 aa).

It belongs to the archaeal-type GTP cyclohydrolase family.

It carries out the reaction GTP + 3 H2O = 2-amino-5-formylamino-6-(5-phospho-D-ribosylamino)pyrimidin-4(3H)-one + 2 phosphate + 2 H(+). In terms of biological role, catalyzes the formation of 2-amino-5-formylamino-6-ribofuranosylamino-4(3H)-pyrimidinone ribonucleotide monophosphate and inorganic phosphate from GTP. Also has an independent pyrophosphate phosphohydrolase activity. This Saccharolobus solfataricus (strain ATCC 35092 / DSM 1617 / JCM 11322 / P2) (Sulfolobus solfataricus) protein is GTP cyclohydrolase III.